The primary structure comprises 343 residues: Heat-inducible transcription repressor HrcA (343 aa).

Belongs to the HrcA family.

Functionally, negative regulator of class I heat shock genes (grpE-dnaK-dnaJ and groELS operons). Prevents heat-shock induction of these operons. This Bacillus licheniformis (strain ATCC 14580 / DSM 13 / JCM 2505 / CCUG 7422 / NBRC 12200 / NCIMB 9375 / NCTC 10341 / NRRL NRS-1264 / Gibson 46) protein is Heat-inducible transcription repressor HrcA.